The following is a 137-amino-acid chain: ATP synthase epsilon chain (137 aa).

This sequence belongs to the ATPase epsilon chain family. In terms of assembly, F-type ATPases have 2 components, CF(1) - the catalytic core - and CF(0) - the membrane proton channel. CF(1) has five subunits: alpha(3), beta(3), gamma(1), delta(1), epsilon(1). CF(0) has three main subunits: a, b and c.

The protein localises to the cellular thylakoid membrane. In terms of biological role, produces ATP from ADP in the presence of a proton gradient across the membrane. This is ATP synthase epsilon chain from Nostoc punctiforme (strain ATCC 29133 / PCC 73102).